The chain runs to 257 residues: UPF0246 protein Sbal195_1149 (257 aa).

Belongs to the UPF0246 family.

The protein is UPF0246 protein Sbal195_1149 of Shewanella baltica (strain OS195).